A 514-amino-acid polypeptide reads, in one-letter code: 2-isopropylmalate synthase (514 aa).

Residues L5 to V267 enclose the Pyruvate carboxyltransferase domain. Residues D14, H202, H204, and N238 each contribute to the Mn(2+) site. The segment at K393 to V514 is regulatory domain.

It belongs to the alpha-IPM synthase/homocitrate synthase family. LeuA type 1 subfamily. As to quaternary structure, homodimer. Mn(2+) is required as a cofactor.

It is found in the cytoplasm. It catalyses the reaction 3-methyl-2-oxobutanoate + acetyl-CoA + H2O = (2S)-2-isopropylmalate + CoA + H(+). It functions in the pathway amino-acid biosynthesis; L-leucine biosynthesis; L-leucine from 3-methyl-2-oxobutanoate: step 1/4. In terms of biological role, catalyzes the condensation of the acetyl group of acetyl-CoA with 3-methyl-2-oxobutanoate (2-ketoisovalerate) to form 3-carboxy-3-hydroxy-4-methylpentanoate (2-isopropylmalate). In Methylococcus capsulatus (strain ATCC 33009 / NCIMB 11132 / Bath), this protein is 2-isopropylmalate synthase.